Reading from the N-terminus, the 403-residue chain is MSKLNVNKVVVAYSGGLDTSVIIPWLKENYDCEVVAFVADVGQGEEELVGIEEKAKASGASECYVVDLKEELVADYIYPTLKTGAYYEGKYLLGTSMARPVIAKAQVEIARKVGADALCHGCTGKGNDQVRFEGAFAALAPDLKVIAPWREWDLVSREQCLDYLAERNIPCAASLTKIYSRDANAWHISTEGGVLESTWNAPNEDCWVWTVDPEQAPNEAEYVTLQVEKGEVVAVDGEQMTPYNALVYLNEKGAKHGVGRIDIVENRLVGMKSRGCYETPGGTIMMEALRAVEQLVLDKTSFEFREELGLKASHLVYDGRWFTPLRKSIMAAADELAQDVNGEVVVKLYKGMATVTQKRSENSLYSEAFATFGEDEVYDQSHAGGFIRLYSLSSRIRALNSQK.

ATP is bound by residues alanine 12–serine 20 and alanine 39. L-citrulline contacts are provided by tyrosine 91 and serine 96. Glycine 121 is a binding site for ATP. L-aspartate-binding residues include threonine 123, asparagine 127, and aspartate 128. Asparagine 127 serves as a coordination point for L-citrulline. Positions 131, 180, 189, 265, and 277 each coordinate L-citrulline.

This sequence belongs to the argininosuccinate synthase family. Type 1 subfamily. Homotetramer.

It localises to the cytoplasm. It carries out the reaction L-citrulline + L-aspartate + ATP = 2-(N(omega)-L-arginino)succinate + AMP + diphosphate + H(+). The protein operates within amino-acid biosynthesis; L-arginine biosynthesis; L-arginine from L-ornithine and carbamoyl phosphate: step 2/3. The polypeptide is Argininosuccinate synthase (Vibrio vulnificus (strain CMCP6)).